The sequence spans 209 residues: Imidazole glycerol phosphate synthase subunit HisH (209 aa).

The Glutamine amidotransferase type-1 domain maps to 1–205; sequence MIAIIDYGMG…QGVVEAWKSS (205 aa). The Nucleophile role is filled by C79. Residues H180 and E182 contribute to the active site.

As to quaternary structure, heterodimer of HisH and HisF.

The protein resides in the cytoplasm. The catalysed reaction is 5-[(5-phospho-1-deoxy-D-ribulos-1-ylimino)methylamino]-1-(5-phospho-beta-D-ribosyl)imidazole-4-carboxamide + L-glutamine = D-erythro-1-(imidazol-4-yl)glycerol 3-phosphate + 5-amino-1-(5-phospho-beta-D-ribosyl)imidazole-4-carboxamide + L-glutamate + H(+). It carries out the reaction L-glutamine + H2O = L-glutamate + NH4(+). The protein operates within amino-acid biosynthesis; L-histidine biosynthesis; L-histidine from 5-phospho-alpha-D-ribose 1-diphosphate: step 5/9. IGPS catalyzes the conversion of PRFAR and glutamine to IGP, AICAR and glutamate. The HisH subunit catalyzes the hydrolysis of glutamine to glutamate and ammonia as part of the synthesis of IGP and AICAR. The resulting ammonia molecule is channeled to the active site of HisF. The protein is Imidazole glycerol phosphate synthase subunit HisH of Bacillus cereus (strain B4264).